A 237-amino-acid polypeptide reads, in one-letter code: Ribosomal RNA large subunit methyltransferase E (237 aa).

Positions 76, 78, 99, 115, and 139 each coordinate S-adenosyl-L-methionine. Lys179 acts as the Proton acceptor in catalysis.

The protein belongs to the class I-like SAM-binding methyltransferase superfamily. RNA methyltransferase RlmE family.

The protein resides in the cytoplasm. It catalyses the reaction uridine(2552) in 23S rRNA + S-adenosyl-L-methionine = 2'-O-methyluridine(2552) in 23S rRNA + S-adenosyl-L-homocysteine + H(+). In terms of biological role, specifically methylates the uridine in position 2552 of 23S rRNA at the 2'-O position of the ribose in the fully assembled 50S ribosomal subunit. This is Ribosomal RNA large subunit methyltransferase E from Rhodopseudomonas palustris (strain TIE-1).